The primary structure comprises 299 residues: Non-structural protein V (299 aa).

Positions 137–160 (DGVEVWGGDEESENSDVDSGEPDP) are enriched in acidic residues. Disordered stretches follow at residues 137 to 186 (DGVE…ETVE) and 205 to 229 (KAGKTLVVPPIPSQERPTASEKPIK). Zn(2+) is bound by residues H232, C251, C255, C267, C269, C272, C276, and C279.

It belongs to the paramyxoviruses V protein family. Interacts with host IFIH1/MDA5 and DHX58/LGP2. Interacts with host TYK2; this interaction inhibits the type I interferon signaling pathway.

It is found in the host cytoplasm. Functionally, plays an essential role in the inhibition of host immune response. Prevents the establishment of cellular antiviral state by blocking interferon-alpha/beta (IFN-alpha/beta) production and signaling pathway. Interacts with host IFIH1/MDA5 and DHX58/LGP2 to inhibit the transduction pathway involved in the activation of IFN-beta promoter, thus protecting the virus against cell antiviral state. Blocks the type I interferon signaling pathway by interacting with host TYK2 and thereby inhibiting downstream STAT1 and STAT2 phosphorylation. The sequence is that of Non-structural protein V (P/V) from Rinderpest virus (strain Kabete O) (RDV).